Here is a 208-residue protein sequence, read N- to C-terminus: Adenylyl-sulfate kinase 3 (208 aa).

37–45 (GLSGSGKST) lines the ATP pocket. Residues D67, R70, R84, N87, 110–111 (IS), and G160 each bind substrate. S111 functions as the Phosphoserine intermediate in the catalytic mechanism.

The protein belongs to the APS kinase family. In terms of tissue distribution, expressed in root vasculature, root tips, leaf epidermal and guard cells, pollen grains and radicle of immature seeds.

The protein resides in the cytoplasm. The protein localises to the cytosol. The enzyme catalyses adenosine 5'-phosphosulfate + ATP = 3'-phosphoadenylyl sulfate + ADP + H(+). It functions in the pathway sulfur metabolism; hydrogen sulfide biosynthesis; sulfite from sulfate: step 2/3. Catalyzes the synthesis of activated sulfate for the sulfation of secondary metabolites, including the glucosinolates. Essential for plant reproduction and viability. The sequence is that of Adenylyl-sulfate kinase 3 from Arabidopsis thaliana (Mouse-ear cress).